Here is a 278-residue protein sequence, read N- to C-terminus: Acyl-[acyl-carrier-protein]--UDP-N-acetylglucosamine O-acyltransferase (278 aa).

The protein belongs to the transferase hexapeptide repeat family. LpxA subfamily. In terms of assembly, homotrimer.

The protein localises to the cytoplasm. The enzyme catalyses a (3R)-hydroxyacyl-[ACP] + UDP-N-acetyl-alpha-D-glucosamine = a UDP-3-O-[(3R)-3-hydroxyacyl]-N-acetyl-alpha-D-glucosamine + holo-[ACP]. The protein operates within glycolipid biosynthesis; lipid IV(A) biosynthesis; lipid IV(A) from (3R)-3-hydroxytetradecanoyl-[acyl-carrier-protein] and UDP-N-acetyl-alpha-D-glucosamine: step 1/6. Its function is as follows. Involved in the biosynthesis of lipid A, a phosphorylated glycolipid that anchors the lipopolysaccharide to the outer membrane of the cell. The sequence is that of Acyl-[acyl-carrier-protein]--UDP-N-acetylglucosamine O-acyltransferase from Brucella anthropi (strain ATCC 49188 / DSM 6882 / CCUG 24695 / JCM 21032 / LMG 3331 / NBRC 15819 / NCTC 12168 / Alc 37) (Ochrobactrum anthropi).